We begin with the raw amino-acid sequence, 137 residues long: MATGTFDIIHPGHITFLREAKKLGDELIVIVAREKNVRHKPKPVVPEEQRRRVVEAIKYVDKAILGDEDDMFRPIMELKPDVIVLGHDQHFDEDWLKEELRKRNLNCEVVRIRVKEDCPLCSSHKIIERILEKYGGR.

Residues 5–6 (TF), 10–13 (HPGH), and Asp-88 contribute to the ATP site.

This sequence belongs to the archaeal FAD synthase family. In terms of assembly, homodimer. A divalent metal cation serves as cofactor.

The enzyme catalyses FMN + ATP + H(+) = FAD + diphosphate. It participates in cofactor biosynthesis; FAD biosynthesis; FAD from FMN: step 1/1. In terms of biological role, catalyzes the transfer of the AMP portion of ATP to flavin mononucleotide (FMN) to produce flavin adenine dinucleotide (FAD) coenzyme. This Archaeoglobus fulgidus (strain ATCC 49558 / DSM 4304 / JCM 9628 / NBRC 100126 / VC-16) protein is FAD synthase.